The primary structure comprises 382 residues: Cytochrome b (382 aa).

Helical transmembrane passes span 33–53 (FGSLLGLCLASQIVTGLFLAM), 77–98 (WLVRNMHANGASFFFICLYTHI), 113–133 (WTVGVILLLLTMMTAFVGYVL), and 178–198 (FFAFHFLLPFVIAAFTAIHLL). Residues H83 and H97 each coordinate heme b. Heme b is bound by residues H182 and H196. Residue H201 participates in a ubiquinone binding. 4 helical membrane passes run 226 to 246 (LKDLLGFTILILTLTSVALLT), 288 to 308 (LGGVLALLASVLILATVPFLQ), 320 to 340 (LTQLVFWTLIANIAILTWIGG), and 347 to 367 (FVSIGQLASLAYFSIFLIIIP).

It belongs to the cytochrome b family. The cytochrome bc1 complex contains 3 respiratory subunits (MT-CYB, CYC1 and UQCRFS1), 2 core proteins (UQCRC1 and UQCRC2) and probably 6 low-molecular weight proteins. Heme b serves as cofactor.

It localises to the mitochondrion inner membrane. Functionally, component of the ubiquinol-cytochrome c reductase complex (complex III or cytochrome b-c1 complex) that is part of the mitochondrial respiratory chain. The b-c1 complex mediates electron transfer from ubiquinol to cytochrome c. Contributes to the generation of a proton gradient across the mitochondrial membrane that is then used for ATP synthesis. The polypeptide is Cytochrome b (mt-cyb) (Sigmops gracilis (Slender fangjaw)).